Reading from the N-terminus, the 340-residue chain is Glyceraldehyde-3-phosphate dehydrogenase (340 aa).

Residues 11–12 and G109 each bind NAD(+); that span reads TI. 138–140 serves as a coordination point for D-glyceraldehyde 3-phosphate; the sequence is SCN. C139 serves as the catalytic Nucleophile. Residue R167 coordinates NAD(+). Position 193–194 (193–194) interacts with D-glyceraldehyde 3-phosphate; the sequence is HA. NAD(+) is bound at residue Q300.

It belongs to the glyceraldehyde-3-phosphate dehydrogenase family. Homotetramer.

It localises to the cytoplasm. It carries out the reaction D-glyceraldehyde 3-phosphate + phosphate + NADP(+) = (2R)-3-phospho-glyceroyl phosphate + NADPH + H(+). It catalyses the reaction D-glyceraldehyde 3-phosphate + phosphate + NAD(+) = (2R)-3-phospho-glyceroyl phosphate + NADH + H(+). Its pathway is carbohydrate degradation; glycolysis; pyruvate from D-glyceraldehyde 3-phosphate: step 1/5. This is Glyceraldehyde-3-phosphate dehydrogenase from Saccharolobus islandicus (strain M.14.25 / Kamchatka #1) (Sulfolobus islandicus).